Here is a 486-residue protein sequence, read N- to C-terminus: Inosine-5'-monophosphate dehydrogenase (486 aa).

CBS domains are found at residues 99 to 154 and 156 to 215; these read IVED…LVKE and MTKE…VRDE. NAD(+) contacts are provided by residues Asp-247 and 294 to 296; that span reads GIG. K(+) is bound by residues Gly-296 and Gly-298. Ser-299 contributes to the IMP binding site. Cys-301 is a K(+) binding site. The active-site Thioimidate intermediate is the Cys-301. Residues 334 to 336, 357 to 358, and 381 to 385 contribute to the IMP site; these read DGG, GN, and YRGMG. Arg-397 acts as the Proton acceptor in catalysis. Residue Glu-412 coordinates IMP. The K(+) site is built by Glu-466, Ser-467, and His-468.

The protein belongs to the IMPDH/GMPR family. As to quaternary structure, homotetramer. It depends on K(+) as a cofactor.

It carries out the reaction IMP + NAD(+) + H2O = XMP + NADH + H(+). It functions in the pathway purine metabolism; XMP biosynthesis via de novo pathway; XMP from IMP: step 1/1. Its activity is regulated as follows. Mycophenolic acid (MPA) is a non-competitive inhibitor that prevents formation of the closed enzyme conformation by binding to the same site as the amobile flap. In contrast, mizoribine monophosphate (MZP) is a competitive inhibitor that induces the closed conformation. MPA is a potent inhibitor of mammalian IMPDHs but a poor inhibitor of the bacterial enzymes. MZP is a more potent inhibitor of bacterial IMPDH. Its function is as follows. Catalyzes the conversion of inosine 5'-phosphate (IMP) to xanthosine 5'-phosphate (XMP), the first committed and rate-limiting step in the de novo synthesis of guanine nucleotides, and therefore plays an important role in the regulation of cell growth. This Pyrococcus horikoshii (strain ATCC 700860 / DSM 12428 / JCM 9974 / NBRC 100139 / OT-3) protein is Inosine-5'-monophosphate dehydrogenase.